Here is a 376-residue protein sequence, read N- to C-terminus: Chaperone protein DnaJ (376 aa).

A J domain is found at 5–72 (DFYEVLGVPK…QKRAAYDQYG (68 aa)). A CR-type zinc finger spans residues 136–214 (GKEAQIRIPS…CHGQGRVKKQ (79 aa)). Zn(2+) is bound by residues Cys-149, Cys-152, Cys-166, Cys-169, Cys-188, Cys-191, Cys-202, and Cys-205. CXXCXGXG motif repeat units lie at residues 149–156 (CETCHGSG), 166–173 (CGTCQGSG), 188–195 (CPHCRGTG), and 202–209 (CTACHGQG). Disordered stretches follow at residues 227-246 (DGMRIRSTGNGEPGTNGGPP) and 354-376 (KKGGAKHSPSTESWTDRLKSFFS). Positions 237-246 (GEPGTNGGPP) are enriched in gly residues. The segment covering 367-376 (WTDRLKSFFS) has biased composition (basic and acidic residues).

The protein belongs to the DnaJ family. As to quaternary structure, homodimer. The cofactor is Zn(2+).

The protein resides in the cytoplasm. Functionally, participates actively in the response to hyperosmotic and heat shock by preventing the aggregation of stress-denatured proteins and by disaggregating proteins, also in an autonomous, DnaK-independent fashion. Unfolded proteins bind initially to DnaJ; upon interaction with the DnaJ-bound protein, DnaK hydrolyzes its bound ATP, resulting in the formation of a stable complex. GrpE releases ADP from DnaK; ATP binding to DnaK triggers the release of the substrate protein, thus completing the reaction cycle. Several rounds of ATP-dependent interactions between DnaJ, DnaK and GrpE are required for fully efficient folding. Also involved, together with DnaK and GrpE, in the DNA replication of plasmids through activation of initiation proteins. The protein is Chaperone protein DnaJ of Acidovorax ebreus (strain TPSY) (Diaphorobacter sp. (strain TPSY)).